The sequence spans 419 residues: Serine/threonine-protein kinase Kist (419 aa).

The Protein kinase domain occupies 23 to 304 (WQVQSRLGSG…AEMALCSPFF (282 aa)). ATP-binding positions include 29 to 37 (LGSGSSASV) and Lys-54. Active-site proton acceptor residues include Asp-141 and Asp-158. Positions 324 to 406 (RLLNVLDDDY…KFVVATFYPL (83 aa)) constitute an RRM domain.

The protein belongs to the protein kinase superfamily. Ser/Thr protein kinase family. As to quaternary structure, interacts with stathmin, PAM and CDKN1B/p27Kip1.

The protein localises to the nucleus. It carries out the reaction L-seryl-[protein] + ATP = O-phospho-L-seryl-[protein] + ADP + H(+). The enzyme catalyses L-threonyl-[protein] + ATP = O-phospho-L-threonyl-[protein] + ADP + H(+). In terms of biological role, upon serum stimulation, phosphorylates CDKN1B/p27Kip1, thus controlling CDKN1B subcellular location and cell cycle progression in G1 phase. May be involved in trafficking and/or processing of RNA. This chain is Serine/threonine-protein kinase Kist (UHMK1), found in Pongo abelii (Sumatran orangutan).